A 460-amino-acid polypeptide reads, in one-letter code: Argininosuccinate lyase (460 aa).

It belongs to the lyase 1 family. Argininosuccinate lyase subfamily.

Its subcellular location is the cytoplasm. The enzyme catalyses 2-(N(omega)-L-arginino)succinate = fumarate + L-arginine. The protein operates within amino-acid biosynthesis; L-arginine biosynthesis; L-arginine from L-ornithine and carbamoyl phosphate: step 3/3. The chain is Argininosuccinate lyase from Lacticaseibacillus paracasei (strain ATCC 334 / BCRC 17002 / CCUG 31169 / CIP 107868 / KCTC 3260 / NRRL B-441) (Lactobacillus paracasei).